The chain runs to 147 residues: Spermidine export protein MdtJ (147 aa).

4 consecutive transmembrane segments (helical) span residues M1–M21, T31–V51, V54–F74, and E81–V101. Over residues T105–N117 the composition is skewed to basic residues. The interval T105–A147 is disordered.

The protein belongs to the drug/metabolite transporter (DMT) superfamily. Small multidrug resistance (SMR) (TC 2.A.7.1) family. MdtJ subfamily. Forms a complex with MdtI.

The protein localises to the cell inner membrane. Functionally, catalyzes the excretion of spermidine. This Yersinia pseudotuberculosis serotype IB (strain PB1/+) protein is Spermidine export protein MdtJ.